The chain runs to 450 residues: UDP-N-acetylmuramoylalanine--D-glutamate ligase (450 aa).

119–125 lines the ATP pocket; sequence GSNGKTT.

It belongs to the MurCDEF family.

It localises to the cytoplasm. The enzyme catalyses UDP-N-acetyl-alpha-D-muramoyl-L-alanine + D-glutamate + ATP = UDP-N-acetyl-alpha-D-muramoyl-L-alanyl-D-glutamate + ADP + phosphate + H(+). The protein operates within cell wall biogenesis; peptidoglycan biosynthesis. Functionally, cell wall formation. Catalyzes the addition of glutamate to the nucleotide precursor UDP-N-acetylmuramoyl-L-alanine (UMA). This is UDP-N-acetylmuramoylalanine--D-glutamate ligase from Streptococcus thermophilus (strain ATCC BAA-491 / LMD-9).